We begin with the raw amino-acid sequence, 367 residues long: Pre-small/secreted glycoprotein (367 aa).

The signal sequence occupies residues 1 to 33 (MGSGYQLLQLPRERFRKTSFLVWVIILFQRAIS). Asn41 carries N-linked (GlcNAc...) asparagine; by host glycosylation. Disulfide bonds link Cys109–Cys136 and Cys122–Cys148. N-linked (GlcNAc...) asparagine; by host glycosylation is found at Asn205, Asn239, Asn258, and Asn269.

Belongs to the filoviruses glycoprotein family. In terms of assembly, homodimer; disulfide-linked. The homodimers are linked by two disulfide bonds in a parallel orientation. Monomer. In terms of processing, this precursor is processed into mature sGP and delta-peptide by host furin or furin-like proteases. The cleavage site corresponds to the furin optimal cleavage sequence [KR]-X-[KR]-R. N-glycosylated. Post-translationally, O-glycosylated.

Its subcellular location is the secreted. Functionally, seems to possess an anti-inflammatory activity as it can reverse the barrier-decreasing effects of TNF alpha. Might therefore contribute to the lack of inflammatory reaction seen during infection in spite the of extensive necrosis and massive virus production. Does not seem to be involved in activation of primary macrophages. Does not seem to interact specifically with neutrophils. Its function is as follows. Viroporin that permeabilizes mammalian cell plasma membranes. It acts by altering permeation of ionic compounds and small molecules. This activity may lead to viral enterotoxic activity. This chain is Pre-small/secreted glycoprotein (GP), found in Reston ebolavirus (strain Siena/Philippine-92) (REBOV).